Consider the following 321-residue polypeptide: Malate dehydrogenase (321 aa).

Residues 10–15 and Asp-34 each bind NAD(+); that span reads GGGQIG. Substrate contacts are provided by Arg-83 and Arg-89. Residues Asn-96 and 119–121 each bind NAD(+); that span reads ISN. Substrate is bound by residues Asn-121 and Arg-152. His-176 acts as the Proton acceptor in catalysis.

Belongs to the LDH/MDH superfamily. MDH type 3 family.

The catalysed reaction is (S)-malate + NAD(+) = oxaloacetate + NADH + H(+). Catalyzes the reversible oxidation of malate to oxaloacetate. This chain is Malate dehydrogenase, found in Trichlorobacter lovleyi (strain ATCC BAA-1151 / DSM 17278 / SZ) (Geobacter lovleyi).